The sequence spans 349 residues: Ion-translocating oxidoreductase complex subunit D (349 aa).

Transmembrane regions (helical) follow at residues 37-57 (AFFG…ALSA), 73-90 (LSDN…VAIP), and 124-144 (AMAA…TWIA). Thr-185 bears the FMN phosphoryl threonine mark. The next 5 helical transmembrane spans lie at 212–232 (ATGV…LVLL), 239–259 (WHIS…GFLL), 265–285 (GSPL…FIAT), 291–311 (ATSP…VYII), and 315–335 (GGYP…APFI).

This sequence belongs to the NqrB/RnfD family. In terms of assembly, the complex is composed of six subunits: RnfA, RnfB, RnfC, RnfD, RnfE and RnfG. The cofactor is FMN.

The protein resides in the cell inner membrane. In terms of biological role, part of a membrane-bound complex that couples electron transfer with translocation of ions across the membrane. The polypeptide is Ion-translocating oxidoreductase complex subunit D (Shewanella sp. (strain W3-18-1)).